The sequence spans 1134 residues: Isoleucine--tRNA ligase (1134 aa).

Positions Pro52 to His62 match the 'HIGH' region motif. The 'KMSKS' region signature appears at Lys656–Arg660. ATP is bound at residue Lys659.

The protein belongs to the class-I aminoacyl-tRNA synthetase family. IleS type 2 subfamily. Monomer. The cofactor is Zn(2+).

Its subcellular location is the cytoplasm. It catalyses the reaction tRNA(Ile) + L-isoleucine + ATP = L-isoleucyl-tRNA(Ile) + AMP + diphosphate. Its function is as follows. Catalyzes the attachment of isoleucine to tRNA(Ile). As IleRS can inadvertently accommodate and process structurally similar amino acids such as valine, to avoid such errors it has two additional distinct tRNA(Ile)-dependent editing activities. One activity is designated as 'pretransfer' editing and involves the hydrolysis of activated Val-AMP. The other activity is designated 'posttransfer' editing and involves deacylation of mischarged Val-tRNA(Ile). This chain is Isoleucine--tRNA ligase, found in Wolbachia sp. subsp. Brugia malayi (strain TRS).